Here is a 261-residue protein sequence, read N- to C-terminus: Kallikrein 1-related peptidase b21 (261 aa).

A signal peptide spans 1–17 (MRFLILFLALSLGEIDA). Positions 18–24 (APPVQSR) are cleaved as a propeptide — activation peptide. Residues 25–258 (IVGGFNCEKN…FTSWIKDTMA (234 aa)) form the Peptidase S1 domain. 5 disulfides stabilise this stretch: cysteine 31–cysteine 173, cysteine 50–cysteine 66, cysteine 152–cysteine 219, cysteine 184–cysteine 198, and cysteine 209–cysteine 234. Histidine 65 serves as the catalytic Charge relay system. Asparagine 102 carries N-linked (GlcNAc...) asparagine glycosylation. Residue aspartate 120 is the Charge relay system of the active site. The active-site Charge relay system is the serine 213.

Belongs to the peptidase S1 family. Kallikrein subfamily. Expressed in testis and submaxillary gland. In the testis, expression localized specifically to Leydig cells in the interstitial tissues.

The catalysed reaction is Preferential cleavage of Arg-|-Xaa bonds in small molecule substrates. Highly selective action to release kallidin (lysyl-bradykinin) from kininogen involves hydrolysis of Met-|-Xaa or Leu-|-Xaa.. Its activity is regulated as follows. Inhibited by protease inhibitors diisopropylfluorophosphate, leupeptin, antipain, benzamidine, phenylmethylsulfonyl fluoride and soybean trypsin inhibitor. Its function is as follows. Glandular kallikreins cleave Met-Lys and Arg-Ser bonds in kininogen to release Lys-bradykinin. Displays trypsin-like substrate specificity and shows activity towards casein, gelatin, fibronectin and IGFBP3. This chain is Kallikrein 1-related peptidase b21 (Klk1b21), found in Mus musculus (Mouse).